The primary structure comprises 317 residues: Small ribosomal subunit protein uS2 (317 aa).

Position 2 is an N-acetylserine (serine 2). Laminin-binding regions lie at residues 161-180 (IPCN…MLSR) and 205-229 (RDPE…EFQG). [DE]-W-[ST] repeat units lie at residues 230-232 (EWT) and 245-247 (DWS). The tract at residues 242–317 (EVADWSEGVA…EWGGASADWS (76 aa)) is laminin-binding. Over residues 271–284 (EAAAPSKAPAAAEG) the composition is skewed to low complexity. The tract at residues 271–317 (EAAAPSKAPAAAEGFAEDWSAQPATEDWSAAPTAQATEWGGASADWS) is disordered. [DE]-W-[ST] repeat units lie at residues 288–290 (DWS), 297–299 (DWS), and 315–317 (DWS).

It belongs to the universal ribosomal protein uS2 family. In terms of assembly, monomer (37LRP) and homodimer (67LR). Component of the small ribosomal subunit. Mature ribosomes consist of a small (40S) and a large (60S) subunit. The 40S subunit contains about 33 different proteins and 1 molecule of RNA (18S). The 60S subunit contains about 49 different proteins and 3 molecules of RNA (28S, 5.8S and 5S). Interacts with rps21. Interacts with several laminins including at least lamb1. Interacts with mdk. Post-translationally, acylated. Acylation may be a prerequisite for conversion of the monomeric 37 kDa laminin receptor precursor (37LRP) to the mature dimeric 67 kDa laminin receptor (67LR), and may provide a mechanism for membrane association. In terms of processing, cleaved by stromelysin-3 (ST3) at the cell surface. Cleavage by stromelysin-3 may be a mechanism to alter cell-extracellular matrix interactions.

The protein resides in the cell membrane. It is found in the cytoplasm. Its subcellular location is the nucleus. In terms of biological role, required for the assembly and/or stability of the 40S ribosomal subunit. Required for the processing of the 20S rRNA-precursor to mature 18S rRNA in a late step of the maturation of 40S ribosomal subunits. Also functions as a cell surface receptor for laminin. Plays a role in cell adhesion to the basement membrane and in the consequent activation of signaling transduction pathways. May play a role in cell fate determination and tissue morphogenesis. The protein is Small ribosomal subunit protein uS2 (rpsa) of Salmo salar (Atlantic salmon).